A 248-amino-acid polypeptide reads, in one-letter code: Cobalt-precorrin-6A reductase (248 aa).

This sequence belongs to the precorrin-6x reductase family.

It carries out the reaction Co-precorrin-6B + NAD(+) = Co-precorrin-6A + NADH + H(+). It functions in the pathway cofactor biosynthesis; adenosylcobalamin biosynthesis; cob(II)yrinate a,c-diamide from sirohydrochlorin (anaerobic route): step 7/10. Functionally, catalyzes the reduction of the macrocycle of cobalt-precorrin-6A to cobalt-precorrin-6B. The polypeptide is Cobalt-precorrin-6A reductase (cbiJ) (Methanococcus maripaludis (Methanococcus deltae)).